Here is a 404-residue protein sequence, read N- to C-terminus: Formate-dependent phosphoribosylglycinamide formyltransferase (404 aa).

N(1)-(5-phospho-beta-D-ribosyl)glycinamide-binding positions include 27–28 and glutamate 87; that span reads EL. ATP is bound by residues arginine 120, lysine 162, 167–172, 202–205, and glutamate 210; these read SSGKGQ and EGFI. Positions 125–320 constitute an ATP-grasp domain; sequence RLAAETLGLP…EFELHARALL (196 aa). Glutamate 279 and glutamate 291 together coordinate Mg(2+). N(1)-(5-phospho-beta-D-ribosyl)glycinamide contacts are provided by residues aspartate 298, lysine 367, and 374–375; that span reads RR.

Belongs to the PurK/PurT family. In terms of assembly, homodimer.

It carries out the reaction N(1)-(5-phospho-beta-D-ribosyl)glycinamide + formate + ATP = N(2)-formyl-N(1)-(5-phospho-beta-D-ribosyl)glycinamide + ADP + phosphate + H(+). The protein operates within purine metabolism; IMP biosynthesis via de novo pathway; N(2)-formyl-N(1)-(5-phospho-D-ribosyl)glycinamide from N(1)-(5-phospho-D-ribosyl)glycinamide (formate route): step 1/1. In terms of biological role, involved in the de novo purine biosynthesis. Catalyzes the transfer of formate to 5-phospho-ribosyl-glycinamide (GAR), producing 5-phospho-ribosyl-N-formylglycinamide (FGAR). Formate is provided by PurU via hydrolysis of 10-formyl-tetrahydrofolate. The chain is Formate-dependent phosphoribosylglycinamide formyltransferase from Bordetella pertussis (strain Tohama I / ATCC BAA-589 / NCTC 13251).